We begin with the raw amino-acid sequence, 149 residues long: D-aminoacyl-tRNA deacylase (149 aa).

Residues 137 to 138 (GP) carry the Gly-cisPro motif, important for rejection of L-amino acids motif.

The protein belongs to the DTD family. In terms of assembly, homodimer.

The protein localises to the cytoplasm. It catalyses the reaction glycyl-tRNA(Ala) + H2O = tRNA(Ala) + glycine + H(+). The catalysed reaction is a D-aminoacyl-tRNA + H2O = a tRNA + a D-alpha-amino acid + H(+). Functionally, an aminoacyl-tRNA editing enzyme that deacylates mischarged D-aminoacyl-tRNAs. Also deacylates mischarged glycyl-tRNA(Ala), protecting cells against glycine mischarging by AlaRS. Acts via tRNA-based rather than protein-based catalysis; rejects L-amino acids rather than detecting D-amino acids in the active site. By recycling D-aminoacyl-tRNA to D-amino acids and free tRNA molecules, this enzyme counteracts the toxicity associated with the formation of D-aminoacyl-tRNA entities in vivo and helps enforce protein L-homochirality. This Fervidobacterium nodosum (strain ATCC 35602 / DSM 5306 / Rt17-B1) protein is D-aminoacyl-tRNA deacylase.